We begin with the raw amino-acid sequence, 308 residues long: Porphobilinogen deaminase (308 aa).

Position 241 is an S-(dipyrrolylmethanemethyl)cysteine (cysteine 241).

This sequence belongs to the HMBS family. In terms of assembly, monomer. It depends on dipyrromethane as a cofactor.

The catalysed reaction is 4 porphobilinogen + H2O = hydroxymethylbilane + 4 NH4(+). The protein operates within porphyrin-containing compound metabolism; protoporphyrin-IX biosynthesis; coproporphyrinogen-III from 5-aminolevulinate: step 2/4. Its function is as follows. Tetrapolymerization of the monopyrrole PBG into the hydroxymethylbilane pre-uroporphyrinogen in several discrete steps. This is Porphobilinogen deaminase from Staphylococcus aureus (strain bovine RF122 / ET3-1).